Consider the following 410-residue polypeptide: Argininosuccinate synthase (410 aa).

Residues 13-21 (AYSGGLDTS) and A40 contribute to the ATP site. Y91 and S96 together coordinate L-citrulline. ATP is bound at residue G121. Positions 123, 127, and 128 each coordinate L-aspartate. N127 contacts L-citrulline. Residues R131, S182, S191, E267, and Y279 each coordinate L-citrulline.

The protein belongs to the argininosuccinate synthase family. Type 1 subfamily. Homotetramer.

It localises to the cytoplasm. The enzyme catalyses L-citrulline + L-aspartate + ATP = 2-(N(omega)-L-arginino)succinate + AMP + diphosphate + H(+). It participates in amino-acid biosynthesis; L-arginine biosynthesis; L-arginine from L-ornithine and carbamoyl phosphate: step 2/3. In Gluconobacter oxydans (strain 621H) (Gluconobacter suboxydans), this protein is Argininosuccinate synthase.